A 327-amino-acid polypeptide reads, in one-letter code: Phenylalanine--tRNA ligase alpha subunit (327 aa).

Glutamate 252 is a Mg(2+) binding site.

This sequence belongs to the class-II aminoacyl-tRNA synthetase family. Phe-tRNA synthetase alpha subunit type 1 subfamily. As to quaternary structure, tetramer of two alpha and two beta subunits. Requires Mg(2+) as cofactor.

Its subcellular location is the cytoplasm. It carries out the reaction tRNA(Phe) + L-phenylalanine + ATP = L-phenylalanyl-tRNA(Phe) + AMP + diphosphate + H(+). This is Phenylalanine--tRNA ligase alpha subunit from Vibrio campbellii (strain ATCC BAA-1116).